The sequence spans 54 residues: ATP synthase F(0) complex subunit 8 (54 aa).

The chain crosses the membrane as a helical span at residues 9–29 (WFMILFFSWVIFLTIIPTKII). Residues 35–54 (NDPTQVDAKEHKNDTWNWPW) are disordered.

Belongs to the ATPase protein 8 family. As to quaternary structure, component of the ATP synthase complex composed at least of ATP5F1A/subunit alpha, ATP5F1B/subunit beta, ATP5MC1/subunit c (homooctomer), MT-ATP6/subunit a, MT-ATP8/subunit 8, ATP5ME/subunit e, ATP5MF/subunit f, ATP5MG/subunit g, ATP5MK/subunit k, ATP5MJ/subunit j, ATP5F1C/subunit gamma, ATP5F1D/subunit delta, ATP5F1E/subunit epsilon, ATP5PF/subunit F6, ATP5PB/subunit b, ATP5PD/subunit d, ATP5PO/subunit OSCP. ATP synthase complex consists of a soluble F(1) head domain (subunits alpha(3) and beta(3)) - the catalytic core - and a membrane F(0) domain - the membrane proton channel (subunits c, a, 8, e, f, g, k and j). These two domains are linked by a central stalk (subunits gamma, delta, and epsilon) rotating inside the F1 region and a stationary peripheral stalk (subunits F6, b, d, and OSCP).

The protein resides in the mitochondrion membrane. Subunit 8, of the mitochondrial membrane ATP synthase complex (F(1)F(0) ATP synthase or Complex V) that produces ATP from ADP in the presence of a proton gradient across the membrane which is generated by electron transport complexes of the respiratory chain. ATP synthase complex consist of a soluble F(1) head domain - the catalytic core - and a membrane F(1) domain - the membrane proton channel. These two domains are linked by a central stalk rotating inside the F(1) region and a stationary peripheral stalk. During catalysis, ATP synthesis in the catalytic domain of F(1) is coupled via a rotary mechanism of the central stalk subunits to proton translocation. In vivo, can only synthesize ATP although its ATP hydrolase activity can be activated artificially in vitro. Part of the complex F(0) domain. This chain is ATP synthase F(0) complex subunit 8, found in Danio rerio (Zebrafish).